We begin with the raw amino-acid sequence, 100 residues long: Protein MEN-8 (100 aa).

Residues 1 to 33 (MANNMKSATFCKATWAIFLVALAILVQLKGSEA) form the signal peptide. 4 disulfides stabilise this stretch: Cys38–Cys76, Cys48–Cys65, Cys66–Cys91, and Cys78–Cys98.

It belongs to the A9/FIL1 family.

It localises to the secreted. The sequence is that of Protein MEN-8 (MEN-8) from Silene latifolia (White campion).